The primary structure comprises 73 residues: Translation initiation factor IF-1 (73 aa).

The S1-like domain maps to 1–73 (MPKKDGAIEI…TRGRIVYRYK (73 aa)).

The protein belongs to the IF-1 family. As to quaternary structure, component of the 30S ribosomal translation pre-initiation complex which assembles on the 30S ribosome in the order IF-2 and IF-3, IF-1 and N-formylmethionyl-tRNA(fMet); mRNA recruitment can occur at any time during PIC assembly.

It localises to the cytoplasm. One of the essential components for the initiation of protein synthesis. Stabilizes the binding of IF-2 and IF-3 on the 30S subunit to which N-formylmethionyl-tRNA(fMet) subsequently binds. Helps modulate mRNA selection, yielding the 30S pre-initiation complex (PIC). Upon addition of the 50S ribosomal subunit IF-1, IF-2 and IF-3 are released leaving the mature 70S translation initiation complex. The polypeptide is Translation initiation factor IF-1 (Salinispora arenicola (strain CNS-205)).